Consider the following 517-residue polypeptide: Probable protein phosphatase 2C 20 (517 aa).

The tract at residues 1–59 (MWVMQGERRRARAPWGPPDTGGALLERWISRERRSDSRDASGSAKQRSAMGNSLPVESK) is disordered. Basic and acidic residues predominate over residues 28 to 39 (WISRERRSDSRD). One can recognise a PPM-type phosphatase domain in the interval 70–373 (KYVVSSMQGW…DNTTVILVLF (304 aa)). Mn(2+) is bound by residues aspartate 105, glycine 106, glutamate 323, and aspartate 364. The interval 380–517 (AVPPVDTDTD…PPHDDTYHRW (138 aa)) is disordered. Positions 402–414 (GSNNATASDNNDP) are enriched in polar residues. Over residues 438-455 (DATATAVGSSSTTAVAAD) the composition is skewed to low complexity. Residues 499 to 517 (LPRSNPDKSPPHDDTYHRW) are compositionally biased toward basic and acidic residues.

It belongs to the PP2C family. Mg(2+) is required as a cofactor. The cofactor is Mn(2+).

The enzyme catalyses O-phospho-L-seryl-[protein] + H2O = L-seryl-[protein] + phosphate. It catalyses the reaction O-phospho-L-threonyl-[protein] + H2O = L-threonyl-[protein] + phosphate. This Oryza sativa subsp. japonica (Rice) protein is Probable protein phosphatase 2C 20.